Reading from the N-terminus, the 235-residue chain is MVDTTNLIPNTPRYLKVPLIAFNTILWVLGLVLVIIGSIGVSFFSNFKDFTKVSKASAALSNLTTGAPAGVLVIGIFFVILTVIGCFVAGKEKLVGLVIYTMLMLIILVALIGVGGKALTLHNDDVVKQIGNAWEDVSNGPKNSTILKLENFLKCCYWNSTSSRNPLLCPKDSKGIPKYTDTCDSVISSKISSNLYLVGAAAVSIGVIEFICMLFALFLIIRICRAPRTKSYDYQ.

Over 1–23 the chain is Cytoplasmic; it reads MVDTTNLIPNTPRYLKVPLIAFN. A helical membrane pass occupies residues 24 to 44; the sequence is TILWVLGLVLVIIGSIGVSFF. At 45 to 68 the chain is on the extracellular side; it reads SNFKDFTKVSKASAALSNLTTGAP. Asn62 is a glycosylation site (N-linked (GlcNAc...) asparagine). A helical membrane pass occupies residues 69–89; it reads AGVLVIGIFFVILTVIGCFVA. Topologically, residues 90-93 are cytoplasmic; sequence GKEK. The chain crosses the membrane as a helical span at residues 94 to 114; sequence LVGLVIYTMLMLIILVALIGV. Residues 115 to 200 lie on the Extracellular side of the membrane; that stretch reads GGKALTLHND…ISSNLYLVGA (86 aa). N-linked (GlcNAc...) asparagine glycans are attached at residues Asn143 and Asn159. A helical transmembrane segment spans residues 201 to 221; sequence AAVSIGVIEFICMLFALFLII. The Cytoplasmic portion of the chain corresponds to 222-235; it reads RICRAPRTKSYDYQ.

This sequence belongs to the tetraspanin (TM4SF) family.

It is found in the membrane. The protein is Probable tetraspanin tspB (tspB) of Dictyostelium discoideum (Social amoeba).